The following is a 345-amino-acid chain: Leucine-rich repeat and transmembrane domain-containing protein 1 (345 aa).

A signal peptide spans 1–27 (MKGELLLFSSVIVLLQVVCSCPDKCYC). An LRRNT domain is found at 28 to 50 (QSSTNFVDCSQQGLAEIPSHLPP). At 28–288 (QSSTNFVDCS…PANLRHAIAT (261 aa)) the chain is on the extracellular side. LRR repeat units lie at residues 51 to 72 (QTRTLHLQDNQIHHLPAFAFRS), 75 to 96 (WLMTLNLSNNSLSNLAPGAFHG), 99 to 120 (HLQVLNLTQNSLLSLESRLFHS), 123 to 144 (QLRELDLSSNNISHLPTSLGET), and 147 to 168 (NLTILAVQQNQLQQLDRALLES). A glycan (N-linked (GlcNAc...) asparagine) is linked at asparagine 104. Asparagine 147 carries an N-linked (GlcNAc...) asparagine glycan. The LRRCT domain maps to 180–234 (NLWKCNCHLLGLKLWLEKFVYKGGLTDGIICESPDTWKGKDLLRIPHELYQPCPL). Residues 289-309 (VIITGVVCGIVCLMMLAAAIY) traverse the membrane as a helical segment. The Cytoplasmic portion of the chain corresponds to 310–345 (GCTYAAITAQYHGGPLAQTNDPGKVEEKERFDSSPA). The tract at residues 326 to 345 (AQTNDPGKVEEKERFDSSPA) is disordered. The span at 332–345 (GKVEEKERFDSSPA) shows a compositional bias: basic and acidic residues.

It localises to the membrane. This chain is Leucine-rich repeat and transmembrane domain-containing protein 1 (LRTM1), found in Homo sapiens (Human).